Consider the following 517-residue polypeptide: Zinc finger protein 215 (517 aa).

The region spanning 48-126 (RQKFRHFQYL…EDMVTLIEDV (79 aa)) is the SCAN box domain. The KRAB domain maps to 164 to 237 (VTFKDVVVEF…EKEIPRKTIF (74 aa)). 4 C2H2-type zinc fingers span residues 379–401 (YECY…QIIH), 407–429 (YKCS…QKLH), 462–484 (YECV…QMIH), and 490–512 (FKCK…QKLH).

It belongs to the krueppel C2H2-type zinc-finger protein family.

The protein localises to the nucleus. Functionally, may be involved in transcriptional regulation. The chain is Zinc finger protein 215 (ZNF215) from Pongo abelii (Sumatran orangutan).